We begin with the raw amino-acid sequence, 175 residues long: DPY30 domain-containing protein 1 (175 aa).

The segment covering 94-112 (QQKEKQKSEDFETGQEKSF) has biased composition (basic and acidic residues). 2 disordered regions span residues 94 to 134 (QQKE…QAEE) and 152 to 175 (APNLSRVEELDEPMLSDNGVSAPP).

Belongs to the dpy-30 family. As to quaternary structure, component of the axonemal radial spoke complex 1 (RS1), at least composed of spoke head proteins RSPH1, RSPH3, RSPH9 and the cilia-specific component RSPH4A or sperm-specific component RSPH6A, spoke stalk proteins RSPH14, DNAJB13, DYDC1, ROPN1L and NME5, and the anchor protein IQUB. Interacts with SH3GL3.

The protein localises to the cytoplasm. The protein resides in the cytoskeleton. It is found in the flagellum axoneme. Functions as part of axonemal radial spoke complexes that play an important part in the motility of sperm and cilia. Plays a crucial role during acrosome biogenesis. The chain is DPY30 domain-containing protein 1 (Dydc1) from Mus musculus (Mouse).